Consider the following 274-residue polypeptide: Glutamate--cysteine ligase regulatory subunit (274 aa).

The residue at position 263 (Lys263) is an N6-acetyllysine.

Belongs to the aldo/keto reductase family. Glutamate--cysteine ligase light chain subfamily. As to quaternary structure, heterodimer of a catalytic heavy chain and a regulatory light chain. In all tissues examined. Highest levels in skeletal muscle.

The protein operates within sulfur metabolism; glutathione biosynthesis; glutathione from L-cysteine and L-glutamate: step 1/2. The polypeptide is Glutamate--cysteine ligase regulatory subunit (GCLM) (Homo sapiens (Human)).